The following is a 352-amino-acid chain: Protein-glutamate methylesterase/protein-glutamine glutaminase (352 aa).

One can recognise a Response regulatory domain in the interval 5 to 123; the sequence is RILIVDDSVI…SKEKAIEYIR (119 aa). D56 is subject to 4-aspartylphosphate. Positions 166-352 constitute a CheB-type methylesterase domain; sequence EIVAIGVSTG…LAEEIIRRIG (187 aa). Active-site residues include S173, H200, and D296.

The protein belongs to the CheB family. Post-translationally, phosphorylated by CheA. Phosphorylation of the N-terminal regulatory domain activates the methylesterase activity.

It is found in the cytoplasm. The catalysed reaction is [protein]-L-glutamate 5-O-methyl ester + H2O = L-glutamyl-[protein] + methanol + H(+). It carries out the reaction L-glutaminyl-[protein] + H2O = L-glutamyl-[protein] + NH4(+). In terms of biological role, involved in chemotaxis. Part of a chemotaxis signal transduction system that modulates chemotaxis in response to various stimuli. Catalyzes the demethylation of specific methylglutamate residues introduced into the chemoreceptors (methyl-accepting chemotaxis proteins or MCP) by CheR. Also mediates the irreversible deamidation of specific glutamine residues to glutamic acid. In Trichodesmium erythraeum (strain IMS101), this protein is Protein-glutamate methylesterase/protein-glutamine glutaminase.